The chain runs to 298 residues: N-acetylmuramic acid 6-phosphate etherase (298 aa).

Residues 55-218 (IHAQVSGGGR…STGLMIKSGK (164 aa)) enclose the SIS domain. Glutamate 83 functions as the Proton donor in the catalytic mechanism. Glutamate 114 is a catalytic residue.

This sequence belongs to the GCKR-like family. MurNAc-6-P etherase subfamily. Homodimer.

The enzyme catalyses N-acetyl-D-muramate 6-phosphate + H2O = N-acetyl-D-glucosamine 6-phosphate + (R)-lactate. It participates in amino-sugar metabolism; 1,6-anhydro-N-acetylmuramate degradation. The protein operates within amino-sugar metabolism; N-acetylmuramate degradation. Its pathway is cell wall biogenesis; peptidoglycan recycling. Its function is as follows. Specifically catalyzes the cleavage of the D-lactyl ether substituent of MurNAc 6-phosphate, producing GlcNAc 6-phosphate and D-lactate. Together with AnmK, is also required for the utilization of anhydro-N-acetylmuramic acid (anhMurNAc) either imported from the medium or derived from its own cell wall murein, and thus plays a role in cell wall recycling. In Shigella flexneri serotype 5b (strain 8401), this protein is N-acetylmuramic acid 6-phosphate etherase.